The following is a 281-amino-acid chain: Rhomboid protease AarA (281 aa).

The next 7 membrane-spanning stretches (helical) occupy residues 16-36 (FSLG…AVYF), 76-96 (MLHS…VIGI), 105-125 (FKLL…SAYW), 145-165 (IGVG…IYLI), 185-205 (QLYN…QSGV), 208-228 (AAHI…ILVP), and 233-253 (VANL…IYLY). The active-site Nucleophile is the Ser-150. His-210 acts as the Charge relay system in catalysis.

This sequence belongs to the peptidase S54 family.

It localises to the cell membrane. The enzyme catalyses Cleaves type-1 transmembrane domains using a catalytic dyad composed of serine and histidine that are contributed by different transmembrane domains.. Rhomboid serine protease that catalyzes intramembrane proteolysis. Mediates quorum-sensing and the subsequent regulation of target genes via activation of the Tat protein export system. Catalyzes the proteolytic activation of TatA by removal of its N-terminal extension. The polypeptide is Rhomboid protease AarA (aarA) (Providencia stuartii).